Reading from the N-terminus, the 460-residue chain is tRNA modification GTPase MnmE (460 aa).

(6S)-5-formyl-5,6,7,8-tetrahydrofolate-binding residues include Arg26, Glu88, and Arg127. Positions 222 to 381 (GLKVAIVGRP…LESAILSKVQ (160 aa)) constitute a TrmE-type G domain. Residue Asn232 coordinates K(+). GTP contacts are provided by residues 232 to 237 (NVGKSS), 251 to 257 (TELPGTT), and 276 to 279 (DTAG). Ser236 provides a ligand contact to Mg(2+). K(+) is bound by residues Thr251, Leu253, and Thr256. Thr257 serves as a coordination point for Mg(2+). Lys460 contacts (6S)-5-formyl-5,6,7,8-tetrahydrofolate.

This sequence belongs to the TRAFAC class TrmE-Era-EngA-EngB-Septin-like GTPase superfamily. TrmE GTPase family. In terms of assembly, homodimer. Heterotetramer of two MnmE and two MnmG subunits. Requires K(+) as cofactor.

The protein resides in the cytoplasm. In terms of biological role, exhibits a very high intrinsic GTPase hydrolysis rate. Involved in the addition of a carboxymethylaminomethyl (cmnm) group at the wobble position (U34) of certain tRNAs, forming tRNA-cmnm(5)s(2)U34. In Cyanothece sp. (strain PCC 7425 / ATCC 29141), this protein is tRNA modification GTPase MnmE.